A 223-amino-acid chain; its full sequence is UPF0441 protein KPN78578_33850 (223 aa).

A disordered region spans residues 165 to 223; it reads SYGAAQPGRTMNVPKTAMAPKPATTTTVTRGGFGESVAKQSTMQRSAAGSTSSSRSMGG. Composition is skewed to low complexity over residues 177-193 and 209-223; these read VPKT…TTVT and RSAA…SMGG.

The protein belongs to the UPF0441 family.

In Klebsiella pneumoniae subsp. pneumoniae (strain ATCC 700721 / MGH 78578), this protein is UPF0441 protein KPN78578_33850.